A 1562-amino-acid chain; its full sequence is Cell surface antigen I/II (1562 aa).

The signal sequence occupies residues 1-38 (MKVKKTYGFRKSKISKTLCGAVLGTVAAVSVAGQKVFA). Low complexity predominate over residues 42–54 (TTTSDVDTKVVGT). The disordered stretch occupies residues 42-91 (TTTSDVDTKVVGTQTGNPATNLPEAQGSASKEAEQSQNQAGETNGSIPVE). Positions 60 to 551 (ATNLPEAQGS…SKAKYDQKIL (492 aa)) are helical. Residues 76 to 87 (QSQNQAGETNGS) are compositionally biased toward polar residues. Ag I/II A repeat units follow at residues 147–221 (KKTT…QKTN), 222–303 (AANQ…QEAN), 304–385 (AANE…KKAN), and 386–467 (AANE…QKDL). Disordered regions lie at residues 824–973 (VPKV…PTDP) and 1482–1509 (SNTV…RTST). Residues 943–958 (PTPPTPTPDQPEPNKP) show a composition bias toward pro residues. The segment covering 1500–1509 (QDPSSPRTST) has biased composition (low complexity). The short motif at 1529 to 1533 (LPNTG) is the LPXTG sorting signal element. Position 1532 is a pentaglycyl murein peptidoglycan amidated threonine (Thr-1532). Positions 1533–1562 (GVTNNAYMPLLGIIGLVTSFSLLGLKAKKD) are cleaved as a propeptide — removed by sortase.

Belongs to the antigen I/II family. In terms of processing, detected as a 185 kDa cell surface protein, but also as 2 proteins in S.mutans culture supernatants of about 150 kDa (antigen I) and 50 kDa (antigen II); antigen II is only seen after proteolysis. Antigen I and II have the same N-terminus but different C-termini.

The protein resides in the secreted. It localises to the cell wall. Its function is as follows. Surface protein antigen implicated in dental caries. The sequence is that of Cell surface antigen I/II from Streptococcus mutans serotype c (strain ATCC 700610 / UA159).